We begin with the raw amino-acid sequence, 452 residues long: uncharacterized protein (452 aa).

Residues 1 to 20 (MQFFGSLFVSLLGAAGLANA) form the signal peptide. A disordered region spans residues 130–151 (TQSSSNSTSTMNSTGSVSGGSV).

The protein resides in the endoplasmic reticulum. This is an uncharacterized protein from Schizosaccharomyces pombe (strain 972 / ATCC 24843) (Fission yeast).